The sequence spans 300 residues: Ribosomal protein L11 methyltransferase (300 aa).

S-adenosyl-L-methionine contacts are provided by Thr152, Gly173, Asp195, and Asn234.

Belongs to the methyltransferase superfamily. PrmA family.

Its subcellular location is the cytoplasm. The catalysed reaction is L-lysyl-[protein] + 3 S-adenosyl-L-methionine = N(6),N(6),N(6)-trimethyl-L-lysyl-[protein] + 3 S-adenosyl-L-homocysteine + 3 H(+). Its function is as follows. Methylates ribosomal protein L11. In Burkholderia orbicola (strain MC0-3), this protein is Ribosomal protein L11 methyltransferase.